We begin with the raw amino-acid sequence, 624 residues long: Multicopper oxidase elcG (624 aa).

Positions 1 to 18 (MACNILNFLTGLLSLSST) are cleaved as a signal peptide. Plastocyanin-like domains lie at 48–160 (PGRA…IERG) and 216–373 (CMDA…TIRI). The N-linked (GlcNAc...) asparagine glycan is linked to asparagine 65. Residues histidine 96, histidine 98, histidine 140, and histidine 142 each contribute to the Cu cation site. N-linked (GlcNAc...) asparagine glycans are attached at residues asparagine 271, asparagine 296, and asparagine 464. Residues 474–603 (FLFQDPSQIE…GGMGVVILDG (130 aa)) form the Plastocyanin-like 3 domain. The Cu cation site is built by histidine 511, histidine 514, histidine 516, histidine 585, cysteine 586, histidine 587, and histidine 591.

The protein belongs to the multicopper oxidase family.

Its pathway is secondary metabolite biosynthesis. Multicopper oxidase; part of the gene cluster that mediates the biosynthesis of elsinochrome C, a perelyenequinone phytotoxin structurally similar to cercosporin. The first step of elsinochrome C biosynthesis is performed by the polyketide synthase elcA which catalyzes the formation of nor-toralactone. The starter unit acyltransferase (SAT) domain of elcA initiates polyketide extension by the selective utilization of acetyl-CoA, which is elongated to the heptaketide in the beta-ketoacyl synthase (KS) domain by successive condensations with six malonyl units introduced by the malonyl acyltransferase (MAT) domain. The product template (PT) domain catalyzes C4-C9 and C2-C11 aldol cyclizations and dehydrations to a trihydroxynaphthalene, which is thought to be delivered to the thioesterase (TE) domain for product release. The bifunctional enzyme elcB then methylates nor-toralactone to toralactone before conducting an unusual oxidative aromatic ring opening. The next step in perylenequinone biosynthesis is an O-methylation at the nascent OH-6 of the elcB product performed by the O-methyltransferase elcD. The oxidative coupling of the two monomeric naphthol units in perylenequinone biosynthesis is catalyzed by the FAD-dependent monooxygenase elcE and the multicopper oxidase elcG. ElcG might catalyze the first intermolecular coupling in a regio- and stereo-selective manner via a phenol radical coupling mechanism and the elcE could forge the second C-C bond intramolecularly via a hydride transfer mechanism. The fasciclin domain-containing protein elcF might also play a role duting this step. The last piece of the puzzle in the biosynthesis of elsinochrome C is the additional annulation by enolate coupling to afford the dihydrobenzo(ghi)perylenequinone system, catalyzed by the FAD-dependent monooxygenase elcH. This chain is Multicopper oxidase elcG, found in Phaeosphaeria nodorum (strain SN15 / ATCC MYA-4574 / FGSC 10173) (Glume blotch fungus).